A 202-amino-acid polypeptide reads, in one-letter code: LexA repressor (202 aa).

A DNA-binding region (H-T-H motif) is located at residues 28–48 (RAEIAQRLGFRSPNAAEEHLK). Active-site for autocatalytic cleavage activity residues include Ser119 and Lys156.

Belongs to the peptidase S24 family. In terms of assembly, homodimer.

The catalysed reaction is Hydrolysis of Ala-|-Gly bond in repressor LexA.. Represses a number of genes involved in the response to DNA damage (SOS response), including recA and lexA. Binds to the 16 bp palindromic sequence 5'-CTGTATATATATACAG-3'. In the presence of single-stranded DNA, RecA interacts with LexA causing an autocatalytic cleavage which disrupts the DNA-binding part of LexA, leading to derepression of the SOS regulon and eventually DNA repair. The polypeptide is LexA repressor (Yersinia enterocolitica serotype O:8 / biotype 1B (strain NCTC 13174 / 8081)).